A 249-amino-acid polypeptide reads, in one-letter code: Adenylate kinase (249 aa).

43 to 48 (GAGKGT) lines the ATP pocket. The tract at residues 63 to 92 (ATGDMLRAQVAAKTALGVEAKKIMDQGGLV) is NMP. Residues Thr64, Arg69, 90 to 92 (GLV), 119 to 122 (GFPR), and Gln126 contribute to the AMP site. An LID region spans residues 160-197 (GRLVHPASGRSYHKLFNPPKKDMTDDVTGEPLVQRSDD). ATP contacts are provided by residues Arg161 and 170–171 (SY). The tract at residues 177-197 (PPKKDMTDDVTGEPLVQRSDD) is disordered. Residues Arg194 and Arg205 each contribute to the AMP site. Gln233 serves as a coordination point for ATP.

The protein belongs to the adenylate kinase family. AK2 subfamily. In terms of assembly, monomer.

It is found in the cytoplasm. The protein resides in the cytosol. Its subcellular location is the mitochondrion intermembrane space. It carries out the reaction AMP + ATP = 2 ADP. Its function is as follows. Catalyzes the reversible transfer of the terminal phosphate group between ATP and AMP. Plays an important role in cellular energy homeostasis and in adenine nucleotide metabolism. Adenylate kinase activity is critical for regulation of the phosphate utilization and the AMP de novo biosynthesis pathways. The polypeptide is Adenylate kinase (Candida albicans (strain SC5314 / ATCC MYA-2876) (Yeast)).